Reading from the N-terminus, the 241-residue chain is Ribonuclease PH (241 aa).

Residues Arg89 and 127-129 (GTR) contribute to the phosphate site.

This sequence belongs to the RNase PH family. As to quaternary structure, homohexameric ring arranged as a trimer of dimers.

The enzyme catalyses tRNA(n+1) + phosphate = tRNA(n) + a ribonucleoside 5'-diphosphate. Phosphorolytic 3'-5' exoribonuclease that plays an important role in tRNA 3'-end maturation. Removes nucleotide residues following the 3'-CCA terminus of tRNAs; can also add nucleotides to the ends of RNA molecules by using nucleoside diphosphates as substrates, but this may not be physiologically important. Probably plays a role in initiation of 16S rRNA degradation (leading to ribosome degradation) during starvation. The protein is Ribonuclease PH of Stenotrophomonas maltophilia (strain K279a).